We begin with the raw amino-acid sequence, 69 residues long: Putative membrane protein insertion efficiency factor (69 aa).

Belongs to the UPF0161 family.

It localises to the cell inner membrane. Functionally, could be involved in insertion of integral membrane proteins into the membrane. This Magnetococcus marinus (strain ATCC BAA-1437 / JCM 17883 / MC-1) protein is Putative membrane protein insertion efficiency factor.